The primary structure comprises 496 residues: Lysine--tRNA ligase (496 aa).

Residues Glu407 and Glu414 each contribute to the Mg(2+) site.

The protein belongs to the class-II aminoacyl-tRNA synthetase family. As to quaternary structure, homodimer. Mg(2+) serves as cofactor.

The protein localises to the cytoplasm. It catalyses the reaction tRNA(Lys) + L-lysine + ATP = L-lysyl-tRNA(Lys) + AMP + diphosphate. In Staphylococcus haemolyticus (strain JCSC1435), this protein is Lysine--tRNA ligase.